A 121-amino-acid polypeptide reads, in one-letter code: Natriuretic peptides B (121 aa).

An N-terminal signal peptide occupies residues 1 to 26; it reads MDLQKVLPQMILLLLFLNLSPLGGHS. Cysteines 99 and 115 form a disulfide.

The protein belongs to the natriuretic peptide family. The precursor molecule is proteolytically cleaved by the endoprotease Furin to produce brain natriuretic peptide 45. May undergo further proteolytic cleavage by various proteases such as DPP4, MME and possibly FAP, to give rise to a variety of shorter peptides. May be cleaved at Ser-91 by the prolyl endopeptidase FAP (seprase) activity (in vitro). May be degraded by IDE. During IDE degradation, the resulting products initially increase the activation of NPR1 and can also stimulate NPR2 to produce cGMP before the fragments are completely degraded and inactivated by IDE (in vitro). In terms of tissue distribution, expressed in the atria and ventricles, but at much lower levels than NPPA. Expression levels in the ventricles are slightly higher than in the atria. Very low levels of expression detected in the brain, hypothalamus, lung and aorta. Atria (at protein level). Cardiocytes (at protein level).

Its subcellular location is the secreted. Functionally, cardiac hormone that plays a key role in mediating cardio-renal homeostasis. May also function as a paracrine antifibrotic factor in the heart. Acts by specifically binding and stimulating NPR1 to produce cGMP, which in turn activates effector proteins that drive various biological responses. Likely involved in regulating the extracellular fluid volume and maintaining the fluid-electrolyte balance through natriuresis, diuresis, kaluresis and chloruresis. In Rattus norvegicus (Rat), this protein is Natriuretic peptides B (Nppb).